A 138-amino-acid polypeptide reads, in one-letter code: MPPKKASGTGPKKGQKTRRREKKNVPHGAAHIKSTFNNTIVTITDPQGNVIAWASSGHVGFKGSRKSTPFAAQLAAENAARKAQEHGVRKVDVFVKGPGSGRETAIRSLQAAGLEVGAISDVTPQPHNGVRPPKRRRV.

Disordered regions lie at residues 1-29 and 117-138; these read MPPK…PHGA and GAIS…RRRV. A compositionally biased stretch (basic residues) spans 13 to 22; that stretch reads KGQKTRRREK.

Belongs to the universal ribosomal protein uS11 family. In terms of assembly, part of the 30S ribosomal subunit. Interacts with proteins S7 and S18. Binds to IF-3.

Functionally, located on the platform of the 30S subunit, it bridges several disparate RNA helices of the 16S rRNA. Forms part of the Shine-Dalgarno cleft in the 70S ribosome. The protein is Small ribosomal subunit protein uS11 of Mycobacterium ulcerans (strain Agy99).